The sequence spans 478 residues: Growth/differentiation factor 10 (478 aa).

The first 33 residues, 1–33, serve as a signal peptide directing secretion; it reads MAHVPARTSPGPGPQLLLLLLPLFLLLLRDVAG. Positions 34–368 are excised as a propeptide; the sequence is SHRAPAWSAL…EKTMQKARRK (335 aa). N-linked (GlcNAc...) asparagine glycosylation is found at N118, N156, and N281. The interval 266–319 is disordered; sequence YDPFPAGDPEPRAAPNNSADPRVRRAAQATGPLQDNELPGLDERPPRAHAQHFH. Disulfide bonds link C376–C443, C405–C475, and C409–C477. N469 carries N-linked (GlcNAc...) asparagine glycosylation.

This sequence belongs to the TGF-beta family. In terms of assembly, homodimer or heterodimer. Can form a non-covalent complex of the mature region and the pro-region. As to expression, expressed in femur, brain, lung, skeletal muscle, pancreas and testis.

Its subcellular location is the secreted. Functionally, growth factor involved in osteogenesis and adipogenesis. Plays an inhibitory role in the process of osteoblast differentiation via SMAD2/3 pathway. Plays an inhibitory role in the process of adipogenesis. This Homo sapiens (Human) protein is Growth/differentiation factor 10.